The sequence spans 130 residues: Fluoride-specific ion channel FluC (130 aa).

The next 4 helical transmembrane spans lie at 4–24, 35–55, 68–88, and 99–119; these read MINV…RYFI, GFPI…GLLT, LNLF…TFSL, and AVFG…GVVL. Residues Gly78 and Thr81 each coordinate Na(+).

The protein belongs to the fluoride channel Fluc/FEX (TC 1.A.43) family.

The protein resides in the cell membrane. It catalyses the reaction fluoride(in) = fluoride(out). With respect to regulation, na(+) is not transported, but it plays an essential structural role and its presence is essential for fluoride channel function. Its function is as follows. Fluoride-specific ion channel. Important for reducing fluoride concentration in the cell, thus reducing its toxicity. This Ruminiclostridium cellulolyticum (strain ATCC 35319 / DSM 5812 / JCM 6584 / H10) (Clostridium cellulolyticum) protein is Fluoride-specific ion channel FluC.